Here is a 120-residue protein sequence, read N- to C-terminus: UPF0102 protein CBU_1742 (120 aa).

The protein belongs to the UPF0102 family.

The protein is UPF0102 protein CBU_1742 of Coxiella burnetii (strain RSA 493 / Nine Mile phase I).